We begin with the raw amino-acid sequence, 359 residues long: Phospho-N-acetylmuramoyl-pentapeptide-transferase (359 aa).

A run of 10 helical transmembrane segments spans residues 27 to 47 (IYAL…MMRW), 73 to 93 (TMGG…WADL), 94 to 114 (TNIY…VGFV), 134 to 154 (LLGQ…QPAY), 166 to 186 (FTPD…IGAS), 197 to 217 (GLAI…IYIA), 233 to 253 (GVGE…GFLW), 261 to 281 (LFMG…IAVL), 286 to 306 (LLLI…IMQV), and 336 to 356 (KIVI…LSTL).

The protein belongs to the glycosyltransferase 4 family. MraY subfamily. The cofactor is Mg(2+).

It localises to the cell inner membrane. It carries out the reaction UDP-N-acetyl-alpha-D-muramoyl-L-alanyl-gamma-D-glutamyl-meso-2,6-diaminopimeloyl-D-alanyl-D-alanine + di-trans,octa-cis-undecaprenyl phosphate = di-trans,octa-cis-undecaprenyl diphospho-N-acetyl-alpha-D-muramoyl-L-alanyl-D-glutamyl-meso-2,6-diaminopimeloyl-D-alanyl-D-alanine + UMP. The protein operates within cell wall biogenesis; peptidoglycan biosynthesis. Catalyzes the initial step of the lipid cycle reactions in the biosynthesis of the cell wall peptidoglycan: transfers peptidoglycan precursor phospho-MurNAc-pentapeptide from UDP-MurNAc-pentapeptide onto the lipid carrier undecaprenyl phosphate, yielding undecaprenyl-pyrophosphoryl-MurNAc-pentapeptide, known as lipid I. This is Phospho-N-acetylmuramoyl-pentapeptide-transferase from Maridesulfovibrio salexigens (strain ATCC 14822 / DSM 2638 / NCIMB 8403 / VKM B-1763) (Desulfovibrio salexigens).